The chain runs to 191 residues: Elongation factor P (191 aa).

K34 is modified (N6-(3,6-diaminohexanoyl)-5-hydroxylysine).

Belongs to the elongation factor P family. May be beta-lysylated on the epsilon-amino group of Lys-34 by the combined action of EpmA and EpmB, and then hydroxylated on the C5 position of the same residue by EpmC (if this protein is present). Lysylation is critical for the stimulatory effect of EF-P on peptide-bond formation. The lysylation moiety may extend toward the peptidyltransferase center and stabilize the terminal 3-CCA end of the tRNA. Hydroxylation of the C5 position on Lys-34 may allow additional potential stabilizing hydrogen-bond interactions with the P-tRNA.

The protein resides in the cytoplasm. It participates in protein biosynthesis; polypeptide chain elongation. Its function is as follows. Involved in peptide bond synthesis. Alleviates ribosome stalling that occurs when 3 or more consecutive Pro residues or the sequence PPG is present in a protein, possibly by augmenting the peptidyl transferase activity of the ribosome. Modification of Lys-34 is required for alleviation. This Psychrobacter sp. (strain PRwf-1) protein is Elongation factor P.